We begin with the raw amino-acid sequence, 110 residues long: Large ribosomal subunit protein uL22 (110 aa).

The protein belongs to the universal ribosomal protein uL22 family. In terms of assembly, part of the 50S ribosomal subunit.

Its function is as follows. This protein binds specifically to 23S rRNA; its binding is stimulated by other ribosomal proteins, e.g. L4, L17, and L20. It is important during the early stages of 50S assembly. It makes multiple contacts with different domains of the 23S rRNA in the assembled 50S subunit and ribosome. The globular domain of the protein is located near the polypeptide exit tunnel on the outside of the subunit, while an extended beta-hairpin is found that lines the wall of the exit tunnel in the center of the 70S ribosome. The protein is Large ribosomal subunit protein uL22 of Shewanella amazonensis (strain ATCC BAA-1098 / SB2B).